The primary structure comprises 257 residues: Early E1A protein (257 aa).

Disordered stretches follow at residues 26–46 and 75–103; these read NATM…PSLH and LAAE…EKEI. Positions 43 to 51 are interaction with RB1 in competition with E2F1; sequence PSLHDLYDL. The segment covering 75–91 has biased composition (low complexity); that stretch reads LAAEEASSPSSDSDSSL. An interaction with UBE2I region spans residues 79-144; sequence EASSPSSDSD…ASHGVQAVSE (66 aa). The span at 94–103 shows a compositional bias: basic and acidic residues; the sequence is PRHDRGEKEI. Residues 104–108 carry the PXLXP motif, interaction with host ZMYND11 motif; it reads PGLKW. An LXCXE motif, interaction with host RB1 and TMEM173/STING motif is present at residues 113–117; the sequence is LRCYE. Residues 158–178 fold into a zinc finger; sequence CKSCEFHRINTGDKAVLCALC. Residues 191-221 form a disordered region; it reads VSDADDETPTTESTLSPPEIGTSPSDNIVRP. Residues 200–209 show a composition bias toward low complexity; the sequence is TTESTLSPPE. Positions 246 to 250 match the PXDLS motif, CTBP-binding motif; it reads PLDLC. The Nuclear localization signal motif lies at 252 to 257; the sequence is RKRPRH.

It belongs to the adenoviridae E1A protein family. In terms of assembly, interacts with host UBE2I; this interaction interferes with polySUMOylation. Interacts with host RB1; this interaction induces the aberrant dissociation of RB1-E2F1 complex thereby disrupting the activity of RB1 and activating E2F1-regulated genes. Interacts with host ATF7; the interaction enhances ATF7-mediated viral transactivation activity which requires the zinc binding domains of both proteins. Isoform early E1A 32 kDa protein and isoform early E1A 26 kDa protein interact (via N-terminus) with CUL1 and E3 ubiquitin ligase RBX1; these interactions inhibit RBX1-CUL1-dependent elongation reaction of ubiquitin chains and attenuate ubiquitination of SCF(FBXW7) target proteins. Interacts (via PXLXP motif) with host ZMYND11/BS69 (via MYND-type zinc finger); this interaction inhibits E1A mediated transactivation. Interacts with host EP300; this interaction stimulates the acetylation of RB1 by recruiting EP300 and RB1 into a multimeric-protein complex. Interacts with host CTBP1 and CTBP2; this interaction seems to potentiate viral replication. Interacts with host DCAF7. Interacts with host DYRK1A. Interacts with host KPNA4; this interaction allows E1A import into the host nucleus. Interacts with host EP400; this interaction stabilizes MYC. Interacts with host TBP protein; this interaction probably disrupts the TBP-TATA complex. Interacts (via LXCXE motif) with host TMEM173/STING; this interaction impairs the ability of TMEM173/STING to sense cytosolic DNA and promote the production of type I interferon (IFN-alpha and IFN-beta). Interacts (via C-terminus) with host ZBED1/hDREF (via C-terminus); the interaction is direct.

Its subcellular location is the host nucleus. Its function is as follows. Plays a role in viral genome replication by driving entry of quiescent cells into the cell cycle. Stimulation of progression from G1 to S phase allows the virus to efficiently use the cellular DNA replicating machinery to achieve viral genome replication. E1A protein has both transforming and trans-activating activities. Induces the disassembly of the E2F1 transcription factor from RB1 by direct competition for the same binding site on RB1, with subsequent transcriptional activation of E2F1-regulated S-phase genes and of the E2 region of the adenoviral genome. Release of E2F1 leads to the ARF-mediated inhibition of MDM2 and causes TP53/p53 to accumulate because it is not targeted for degradation by MDM2-mediated ubiquitination anymore. This increase in TP53, in turn, would arrest the cell proliferation and direct its death but this effect is counteracted by the viral protein E1B-55K. Inactivation of the ability of RB1 to arrest the cell cycle is critical for cellular transformation, uncontrolled cellular growth and proliferation induced by viral infection. Interaction with RBX1 and CUL1 inhibits ubiquitination of the proteins targeted by SCF(FBXW7) ubiquitin ligase complex, and may be linked to unregulated host cell proliferation. The tumorigenesis-restraining activity of E1A may be related to the disruption of the host CtBP-CtIP complex through the CtBP binding motif. Interaction with host TMEM173/STING impairs the ability of TMEM173/STING to sense cytosolic DNA and promote the production of type I interferon (IFN-alpha and IFN-beta). Promotes the sumoylation of host ZBED1/hDREF with SUMO1. This is Early E1A protein from Human adenovirus E serotype 4 (HAdV-4).